The sequence spans 187 residues: Elongation factor P (187 aa).

It belongs to the elongation factor P family.

Its subcellular location is the cytoplasm. The protein operates within protein biosynthesis; polypeptide chain elongation. Involved in peptide bond synthesis. Stimulates efficient translation and peptide-bond synthesis on native or reconstituted 70S ribosomes in vitro. Probably functions indirectly by altering the affinity of the ribosome for aminoacyl-tRNA, thus increasing their reactivity as acceptors for peptidyl transferase. This Treponema pallidum (strain Nichols) protein is Elongation factor P (efp).